A 221-amino-acid chain; its full sequence is UPF0758 protein YicR (221 aa).

The MPN domain occupies 99–221; the sequence is ALLSPEMTRE…YVSFAERGWI (123 aa). The Zn(2+) site is built by His-170, His-172, and Asp-183. Positions 170–183 match the JAMM motif motif; it reads HNHPSGCAEPSKAD.

This sequence belongs to the UPF0758 family. YicR subfamily.

This Salmonella agona (strain SL483) protein is UPF0758 protein YicR.